A 425-amino-acid polypeptide reads, in one-letter code: MKNFTVITLGCPKNTVDSRHLIDALTKEGFYYVEEFKKADFVFINTCCFINDAKEESIDEILTAAKFKIDRKLIVFGCLSKRYGKELEKEIPEIDAVFGVDEKDKIIDYIKQFSKNSNFISQNFQYTVEPPSYRYIKIAEGCSRRCSFCIIPDVRGPFRSLNPEEILKEVENFVHSGIKEFILVAQDITQYGKDLKGYTLKRLLKDLCSIKGDFWIRLLYLYPSDIDENLIETIADEEKIVKYLDIPMQHSEERILRLMGRRGTKKEYLKKIKQIRQAIPEVTLRSTFIVGFPTETEEEFQRLVDFIEEVQFDRLGVFKYSKEEGTKAYSLKGQIPENVKNRRYNEIMARQAVISLEKNRALIGKKYEALIDYIDADIAIARLYCHAPEIDGVVILENTADLKAGEKVTILITEGYEYDVKGVIV.

The 114-residue stretch at 2-115 (KNFTVITLGC…IIDYIKQFSK (114 aa)) folds into the MTTase N-terminal domain. Positions 11, 47, 78, 142, 146, and 149 each coordinate [4Fe-4S] cluster. The Radical SAM core domain maps to 128 to 357 (VEPPSYRYIK…MARQAVISLE (230 aa)). One can recognise a TRAM domain in the interval 360 to 425 (RALIGKKYEA…YEYDVKGVIV (66 aa)).

This sequence belongs to the methylthiotransferase family. RimO subfamily. [4Fe-4S] cluster is required as a cofactor.

Its subcellular location is the cytoplasm. It carries out the reaction L-aspartate(89)-[ribosomal protein uS12]-hydrogen + (sulfur carrier)-SH + AH2 + 2 S-adenosyl-L-methionine = 3-methylsulfanyl-L-aspartate(89)-[ribosomal protein uS12]-hydrogen + (sulfur carrier)-H + 5'-deoxyadenosine + L-methionine + A + S-adenosyl-L-homocysteine + 2 H(+). Its function is as follows. Catalyzes the methylthiolation of an aspartic acid residue of ribosomal protein uS12. The protein is Ribosomal protein uS12 methylthiotransferase RimO of Thermodesulfovibrio yellowstonii (strain ATCC 51303 / DSM 11347 / YP87).